We begin with the raw amino-acid sequence, 359 residues long: tRNA N6-adenosine threonylcarbamoyltransferase (359 aa).

Fe cation-binding residues include His115 and His119. Residues 137-141, Asp170, Gly183, and Asn283 contribute to the substrate site; that span reads LVSGG. Residue Asp311 coordinates Fe cation. Residues 328–359 form a disordered region; that stretch reads APDSLDLAPRSRWPLDEKSAPLIGTGRRGAKA.

This sequence belongs to the KAE1 / TsaD family. Fe(2+) is required as a cofactor.

Its subcellular location is the cytoplasm. It carries out the reaction L-threonylcarbamoyladenylate + adenosine(37) in tRNA = N(6)-L-threonylcarbamoyladenosine(37) in tRNA + AMP + H(+). Required for the formation of a threonylcarbamoyl group on adenosine at position 37 (t(6)A37) in tRNAs that read codons beginning with adenine. Is involved in the transfer of the threonylcarbamoyl moiety of threonylcarbamoyl-AMP (TC-AMP) to the N6 group of A37, together with TsaE and TsaB. TsaD likely plays a direct catalytic role in this reaction. In Brucella anthropi (strain ATCC 49188 / DSM 6882 / CCUG 24695 / JCM 21032 / LMG 3331 / NBRC 15819 / NCTC 12168 / Alc 37) (Ochrobactrum anthropi), this protein is tRNA N6-adenosine threonylcarbamoyltransferase.